An 805-amino-acid chain; its full sequence is Phenylalanine--tRNA ligase beta subunit (805 aa).

The region spanning 40–162 (FKNPDYLQLG…NRDEFGDYLS (123 aa)) is the tRNA-binding domain. The region spanning 412–486 (AFNRKIYLNF…KILDLNKIKE (75 aa)) is the B5 domain. The Mg(2+) site is built by Asp464, Asp470, Glu473, and Glu474.

It belongs to the phenylalanyl-tRNA synthetase beta subunit family. Type 1 subfamily. Tetramer of two alpha and two beta subunits. Requires Mg(2+) as cofactor.

Its subcellular location is the cytoplasm. The catalysed reaction is tRNA(Phe) + L-phenylalanine + ATP = L-phenylalanyl-tRNA(Phe) + AMP + diphosphate + H(+). This Mycoplasma pneumoniae (strain ATCC 29342 / M129 / Subtype 1) (Mycoplasmoides pneumoniae) protein is Phenylalanine--tRNA ligase beta subunit (pheT).